A 114-amino-acid chain; its full sequence is Gamma-glutamylcyclotransferase family protein ytfP (114 aa).

Belongs to the gamma-glutamylcyclotransferase family.

The protein resides in the cytoplasm. Functionally, may play a role in antibiotic biosynthesis. This Citrobacter rodentium (strain ICC168) (Citrobacter freundii biotype 4280) protein is Gamma-glutamylcyclotransferase family protein ytfP (ytfP).